The chain runs to 479 residues: MSSPRNGYRDRLILAVDVGSSVLRCHLYNQSGEICGSAEDKLKVLYPQAGYVEIDPESLWEQFVRVVKEAVADAGIQMSQVAGLGISTQRGTFITWNKKTGETFHNFISWQDLRAADLVSSWNRSLLLKAVHGVCTALHFFTRRKRFLAASLINFTTQHVSLRLVWVLQNIPQVRQAAEKGNCCFGTIDTWLLHKLTKGTVFATDYSNASGTAVFDPYLMCWSSFLCSLLSIPLSIFPPVEDTSHSFGLADPTIFGAPVPILALVADQQAAMFGQCCFDVGSVKLTMGTGSFISINTGETLHTSIAGLYPLIGWKVGDEVVCLAEGNASDTGTAIKWAEELNLFTSVADTEAMARSVPDCGGIYLVPSFSGLQAPINDPYACASFMGLKPSTSKSHLVRAILESVAYRNKQLYDTVLRETTIPITLIRADGGVSNNNFIMQMTADLLGQTIDKPKHTDMSSLGAAFLAGMAVYGPLKTS.

The ATP site is built by Ser20 and Ser21. Residues Arg90, Asp267, and Gln268 each coordinate glycerol. 3 residues coordinate ATP: Thr289, Gly332, and Gly432.

This sequence belongs to the FGGY kinase family.

It is found in the cytoplasm. It carries out the reaction glycerol + ATP = sn-glycerol 3-phosphate + ADP + H(+). It functions in the pathway polyol metabolism; glycerol degradation via glycerol kinase pathway; sn-glycerol 3-phosphate from glycerol: step 1/1. In terms of biological role, skin-specific kinase that plays a key role in glycerol metabolism, catalyzing its phosphorylation to produce sn-glycerol 3-phosphate. Involved in skin-specific regulation of sterol regulatory element-binding protein (SREBP) processing and lipid biosynthesis. This is Glycerol kinase 5 (gk5) from Xenopus laevis (African clawed frog).